The chain runs to 131 residues: Transcription antitermination protein NusB (131 aa).

It belongs to the NusB family.

Functionally, involved in transcription antitermination. Required for transcription of ribosomal RNA (rRNA) genes. Binds specifically to the boxA antiterminator sequence of the ribosomal RNA (rrn) operons. This chain is Transcription antitermination protein NusB, found in Campylobacter hominis (strain ATCC BAA-381 / DSM 21671 / CCUG 45161 / LMG 19568 / NCTC 13146 / CH001A).